A 217-amino-acid chain; its full sequence is Glycerol-3-phosphate acyltransferase (217 aa).

6 helical membrane-spanning segments follow: residues 3 to 23, 56 to 76, 78 to 98, 120 to 140, 142 to 162, and 163 to 183; these read IVILLLVAYLLGSIPSGVWIG, VLLMDILKGTLATSLPYLFGL, GVNPLFFGVAAVLGHTFPIFA, FFIYSALIFVICLYLTSMVSL, SMISAVLITLSTIILPFTVPA, and ILPTFNWLLTVIAIALTTFIF.

Belongs to the PlsY family. In terms of assembly, probably interacts with PlsX.

The protein localises to the cell membrane. The enzyme catalyses an acyl phosphate + sn-glycerol 3-phosphate = a 1-acyl-sn-glycero-3-phosphate + phosphate. It participates in lipid metabolism; phospholipid metabolism. In terms of biological role, catalyzes the transfer of an acyl group from acyl-phosphate (acyl-PO(4)) to glycerol-3-phosphate (G3P) to form lysophosphatidic acid (LPA). This enzyme utilizes acyl-phosphate as fatty acyl donor, but not acyl-CoA or acyl-ACP. This Enterococcus faecalis (strain ATCC 700802 / V583) protein is Glycerol-3-phosphate acyltransferase.